Here is a 611-residue protein sequence, read N- to C-terminus: Elongation factor 4 (611 aa).

One can recognise a tr-type G domain in the interval 11-193 (KHIRNFSIVA…KIVKDVPAPT (183 aa)). Residues 23–28 (DHGKST) and 140–143 (NKID) contribute to the GTP site.

Belongs to the TRAFAC class translation factor GTPase superfamily. Classic translation factor GTPase family. LepA subfamily.

The protein localises to the cell membrane. The catalysed reaction is GTP + H2O = GDP + phosphate + H(+). Required for accurate and efficient protein synthesis under certain stress conditions. May act as a fidelity factor of the translation reaction, by catalyzing a one-codon backward translocation of tRNAs on improperly translocated ribosomes. Back-translocation proceeds from a post-translocation (POST) complex to a pre-translocation (PRE) complex, thus giving elongation factor G a second chance to translocate the tRNAs correctly. Binds to ribosomes in a GTP-dependent manner. The sequence is that of Elongation factor 4 from Limosilactobacillus reuteri (strain DSM 20016) (Lactobacillus reuteri).